The chain runs to 485 residues: WD repeat-containing protein 13 (485 aa).

Ser70, Ser74, and Ser79 each carry phosphoserine. Arg114 is modified (asymmetric dimethylarginine; alternate). Position 114 is an omega-N-methylarginine; alternate (Arg114). WD repeat units follow at residues 170-210 (HVDE…PTVL), 215-254 (GHTR…CIRE), 302-341 (KLTG…GKLT), 406-446 (HPVR…KAAV), and 451-484 (GHSA…RREQ).

The protein localises to the nucleus. This is WD repeat-containing protein 13 (WDR13) from Pongo abelii (Sumatran orangutan).